The following is a 353-amino-acid chain: MSKFSYLQNGKASTNGVPHANGHHQQHQNGHSNGVARNGGTATDTLPVAYQQKAATSGPFHMPRTEHVGYTYDTLQEIATYLLERTELRPKVGIICGSGLGTLAEQLTDVDSFDYETIPHFPVSTVAGHVGRLVFGYLAGVPVMCMQGRFHHYEGYPLAKCAMPVRVMHLIGCTHLIATNAAGGANPKYRVGDIMLIKDHINLMGFAGNNPLQGPNDERFGPRFFGMANTYDPKLNQQAKVIARQIGIENELREGVYTCLGGPNFETVAEVKMLSMLGVDAIGMSTVHEIITARHCGMTCFAFSLITNMCTMSYEEEEEHCHDSIVGVGKNREKTLGEFVSRIVKHIHYEAKK.

Residues 1–16 (MSKFSYLQNGKASTNG) show a composition bias toward polar residues. Positions 1–42 (MSKFSYLQNGKASTNGVPHANGHHQQHQNGHSNGVARNGGTA) are disordered. Phosphate is bound by residues S98, H129, 149 to 151 (RFH), and A181. E266 lines the a purine D-ribonucleoside pocket. Residue S285 participates in phosphate binding. A purine D-ribonucleoside is bound at residue N308.

It belongs to the PNP/MTAP phosphorylase family. Homotrimer.

The enzyme catalyses inosine + phosphate = alpha-D-ribose 1-phosphate + hypoxanthine. It catalyses the reaction guanosine + phosphate = alpha-D-ribose 1-phosphate + guanine. The catalysed reaction is 2'-deoxyguanosine + phosphate = 2-deoxy-alpha-D-ribose 1-phosphate + guanine. It carries out the reaction 2'-deoxyinosine + phosphate = 2-deoxy-alpha-D-ribose 1-phosphate + hypoxanthine. Its pathway is purine metabolism; purine nucleoside salvage. With respect to regulation, inhibited by 5'-deaza-1'-aza-2c-deoxy-1'-(9-methylene) immucillin-H (DADMe-ImmH). Functionally, as part of the purine salvage pathway, catalyzes the phosphorolytic breakdown of the N-glycosidic bond in the beta-(deoxy)ribonucleoside molecules, with the formation of the corresponding free purine bases and pentose-1-phosphate. Preferentially acts on 2'-deoxyinosine and inosine, and to a lesser extent on 2'-deoxyguanosine and guanosine. Has no activity towards adenosine or 2'-deoxyadenosine. This chain is Purine nucleoside phosphorylase, found in Anopheles gambiae (African malaria mosquito).